Reading from the N-terminus, the 369-residue chain is Core-capsid bridging protein (369 aa).

The interval 15–50 (APEIYGPPKKEEQDYKPRKLKRVKKKKKDDDDDELD) is disordered. Positions 22-31 (PKKEEQDYKP) are enriched in basic and acidic residues. Basic residues predominate over residues 32–41 (RKLKRVKKKK). Residue Thr-85 is modified to Phosphothreonine; by host. Phosphoserine; by host is present on Ser-166. Residues 307–342 (PGYRGYTYRPRRRATTRRRTTTGTRRRRRRRQPVLA) are disordered. The segment covering 315–338 (RPRRRATTRRRTTTGTRRRRRRRQ) has biased composition (basic residues).

This sequence belongs to the adenoviridae core-capsid bridging protein family. As to quaternary structure, monomer. Homodimer. Exists in equilibrium between monomers and dimers in solution. Interacts with the histone-like nucleoprotein; this interactions bridge the virus core to the capsid. Interacts with core protein X; this interactions bridge the virus core to the capsid. Interacts with the endosome lysis protein VI; this interactions bridge the virus core to the capsid. Interacts with the peripentonal hexons. Interacts with host NPM1; this interaction might play a role in virus assembly.

It is found in the virion. The protein resides in the host nucleus. Its subcellular location is the host nucleolus. In terms of biological role, associates loosely with the viral DNA to form an outer shell around the nucleoprotein-DNA complex and links it with the capsid by binding the endosome lysis protein. Dissociates from the viral genome during entry. Might be involved in nuclear capsid assembly of the viral particles through its association with NPM1/nucleophosmin. This Homo sapiens (Human) protein is Core-capsid bridging protein.